The sequence spans 30 residues: Kalata-B10 (30 aa).

The segment at residues 1–30 (GLPTCGETCFGGTCNTPGCSCSSWPICTRD) is a cross-link (cyclopeptide (Gly-Asp)). Cystine bridges form between Cys5–Cys19, Cys9–Cys21, and Cys14–Cys27.

The protein belongs to the cyclotide family. Moebius subfamily. Post-translationally, this peptide occurs in both cyclic and linear forms. The linear form contains unmodified Trp-24, the cyclic peptide occurs in two forms with unmodified Trp-24, and with Trp-24 oxidized to form oxindolylalanine. Oxidation is enhanced by exposure to sunlight.

Its function is as follows. Probably participates in a plant defense mechanism. This chain is Kalata-B10, found in Oldenlandia affinis.